A 335-amino-acid chain; its full sequence is Ferredoxin--NADP reductase (335 aa).

Residues aspartate 35, glutamine 43, tyrosine 48, alanine 88, phenylalanine 122, aspartate 287, and serine 328 each coordinate FAD.

Belongs to the ferredoxin--NADP reductase type 2 family. In terms of assembly, homodimer. The cofactor is FAD.

The enzyme catalyses 2 reduced [2Fe-2S]-[ferredoxin] + NADP(+) + H(+) = 2 oxidized [2Fe-2S]-[ferredoxin] + NADPH. The sequence is that of Ferredoxin--NADP reductase from Thermus thermophilus (strain ATCC BAA-163 / DSM 7039 / HB27).